A 122-amino-acid chain; its full sequence is Basic phospholipase A2 (122 aa).

Cystine bridges form between Cys-26–Cys-115, Cys-28–Cys-44, Cys-43–Cys-95, Cys-49–Cys-122, Cys-50–Cys-88, Cys-57–Cys-81, and Cys-75–Cys-86. Ca(2+) contacts are provided by Tyr-27, Gly-29, and Gly-31. His-47 is a catalytic residue. Ca(2+) is bound at residue Asp-48. The active site involves Asp-89.

It belongs to the phospholipase A2 family. Group II subfamily. D49 sub-subfamily. As to quaternary structure, homodimer. Ca(2+) serves as cofactor. In terms of tissue distribution, expressed by the venom gland.

It is found in the secreted. It carries out the reaction a 1,2-diacyl-sn-glycero-3-phosphocholine + H2O = a 1-acyl-sn-glycero-3-phosphocholine + a fatty acid + H(+). Functionally, snake venom phospholipase A2 (PLA2) that inhibits neuromuscular transmission by blocking acetylcholine release from the nerve termini. PLA2 catalyzes the calcium-dependent hydrolysis of the 2-acyl groups in 3-sn-phosphoglycerides. This chain is Basic phospholipase A2, found in Gloydius blomhoffii (Mamushi).